Consider the following 587-residue polypeptide: MYRTNTCGELRLSHLQQTVTLCGWVQRVRRMGGMTFVDLRDRYGTTQLVFNRDSAPAELCDRAEDLGREWVIRATGTVMERSSKNPNIPTGDIEIAVGEMDVLNRSEVPPFTIEDETDGGDDLRMKYRYLDLRRHCVRSNMELRHRMALEVRKYLDGEGFLEVETPMLIKSTPEGARDFVVPSRMNPGQFYALPQSPQTFKQLLMVSGFDRYFQIVKCFRDEDLRADRQPEFTQIDCEMSFVEQEDVLSTFEGMAKHLFRTIRHVEISEAFPRMTWHDAMKYYGSDKPDTRFDMRFVELMDVLKGHGFSVFDSAAYIGGICAKGAGSYTRKQLDALTDFVKRPQVGAKGMVYARVESDGSVKSSVDKFYTQETLQELRRTMEAEPGDLILILSGDDLMKTRKQLCELRLEVGSQLGLRDKNKFSCLWVVDFPLFEWDEETKRFYAMHHPFTSPKPEDIPLLDTDPGAVRANAYDMVINGVEVGGGSIRIHDSALQQKMFELLGFTPEKAQEQFGFLMNAFKYGAPPHGGLAYGLDRWVSLFAGLDSIRDCIAFPKNNAGRDVMIDAPSVIDEAQLQELFLELIPNEN.

Glu-174 provides a ligand contact to L-aspartate. The interval 198-201 is aspartate; sequence QTFK. Arg-220 provides a ligand contact to L-aspartate. Residues 220–222 and Gln-229 contribute to the ATP site; that span reads RDE. His-447 lines the L-aspartate pocket. ATP is bound at residue Glu-481. Position 488 (Arg-488) interacts with L-aspartate. 533–536 is a binding site for ATP; the sequence is GLDR.

The protein belongs to the class-II aminoacyl-tRNA synthetase family. Type 1 subfamily. In terms of assembly, homodimer.

The protein resides in the cytoplasm. It catalyses the reaction tRNA(Asp) + L-aspartate + ATP = L-aspartyl-tRNA(Asp) + AMP + diphosphate. Its function is as follows. Catalyzes the attachment of L-aspartate to tRNA(Asp) in a two-step reaction: L-aspartate is first activated by ATP to form Asp-AMP and then transferred to the acceptor end of tRNA(Asp). In Porphyromonas gingivalis (strain ATCC BAA-308 / W83), this protein is Aspartate--tRNA ligase.